Here is a 378-residue protein sequence, read N- to C-terminus: D-galactarolactone cycloisomerase (378 aa).

The Mg(2+) site is built by Asp194, Glu220, and Glu246. The active-site Proton acceptor is His296.

It belongs to the mandelate racemase/muconate lactonizing enzyme family. Homooctamer. Mg(2+) serves as cofactor.

It carries out the reaction D-glucaro-1,4-lactone = 5-dehydro-4-deoxy-D-glucarate + H(+). It catalyses the reaction D-galactaro-1,4-lactone = 5-dehydro-4-deoxy-D-glucarate + H(+). It participates in carbohydrate acid metabolism; D-galacturonate degradation via prokaryotic oxidative pathway. Catalyzes the ring opening of D-galactaro-1,4-lactone to yield 5-keto-4-deoxy-D-glucarate (KDG) via a beta-elimination reaction. This is a step in the oxidative degradation pathway of D-galacturonate, which allows A.tumefaciens to utilize D-galacturonate as a sole carbon source. To a lesser extent, can also use D-glucaro-1,4-lactone as substrate to produce KDG, but cannot use D-galactaro-1,5-lactone, D-glucaro-6,3-lactone and linear D-glucarate. In Agrobacterium fabrum (strain C58 / ATCC 33970) (Agrobacterium tumefaciens (strain C58)), this protein is D-galactarolactone cycloisomerase (gci).